The sequence spans 1047 residues: Atrial natriuretic peptide receptor 2 (1047 aa).

Positions 1–22 (MALPSLLLLVAALAGGVRPPGA) are cleaved as a signal peptide. Residues 23–458 (RNLTLAVVLP…DKTPLSTLAI (436 aa)) are Extracellular-facing. N-linked (GlcNAc...) asparagine glycosylation is found at Asn24 and Asn35. The cysteines at positions 75 and 101 are disulfide-linked. N-linked (GlcNAc...) asparagine glycans are attached at residues Asn161, Asn195, Asn244, Asn277, and Asn349. Residues 459-478 (VALGTGITFIMFGVSSFLIF) form a helical membrane-spanning segment. Residues 479 to 1047 (RKLMLEKELA…GERKGPPGLL (569 aa)) lie on the Cytoplasmic side of the membrane. Ser513 is modified (phosphoserine). Residues 513 to 786 (SRLTLSLRGS…PDFGQIKGFI (274 aa)) form the Protein kinase domain. The residue at position 516 (Thr516) is a Phosphothreonine. Residues Ser518, Ser522, Ser523, and Ser526 each carry the phosphoserine modification. Thr529 bears the Phosphothreonine mark. One can recognise a Guanylate cyclase domain in the interval 861–991 (TIYFSDIVGF…DTVNTASRME (131 aa)).

It belongs to the adenylyl cyclase class-4/guanylyl cyclase family. In terms of processing, phosphorylated. Phosphorylation of the protein kinase-like domain is required for full activation by CNP. Post-translationally, glycosylated.

The protein localises to the cell membrane. It catalyses the reaction GTP = 3',5'-cyclic GMP + diphosphate. In terms of biological role, receptor for the C-type natriuretic peptide NPPC/CNP hormone. Has guanylate cyclase activity upon binding of its ligand. May play a role in the regulation of skeletal growth. In Homo sapiens (Human), this protein is Atrial natriuretic peptide receptor 2 (NPR2).